The following is a 219-amino-acid chain: Orotate phosphoribosyltransferase (219 aa).

Lys26 contributes to the 5-phospho-alpha-D-ribose 1-diphosphate binding site. Position 34–35 (34–35 (FF)) interacts with orotate. Residues 72-73 (YK), Arg98, Lys99, Lys102, His104, and 124-132 (DDVITAGTA) each bind 5-phospho-alpha-D-ribose 1-diphosphate. The orotate site is built by Thr128 and Arg156.

It belongs to the purine/pyrimidine phosphoribosyltransferase family. PyrE subfamily. In terms of assembly, homodimer. It depends on Mg(2+) as a cofactor.

It carries out the reaction orotidine 5'-phosphate + diphosphate = orotate + 5-phospho-alpha-D-ribose 1-diphosphate. It functions in the pathway pyrimidine metabolism; UMP biosynthesis via de novo pathway; UMP from orotate: step 1/2. In terms of biological role, catalyzes the transfer of a ribosyl phosphate group from 5-phosphoribose 1-diphosphate to orotate, leading to the formation of orotidine monophosphate (OMP). The protein is Orotate phosphoribosyltransferase of Xanthomonas oryzae pv. oryzae (strain MAFF 311018).